A 469-amino-acid polypeptide reads, in one-letter code: Protein POLLENLESS 3-LIKE 1 (469 aa).

The tract at residues 1 to 20 is disordered; sequence MRRRESRGAKGGGFLTPPPS. TPR repeat units lie at residues 88 to 121, 124 to 157, and 184 to 217; these read DSAL…CPFE, DSID…LEQD, and ARIL…EPDN. Residues 139–191 are a coiled coil; sequence RITEVAELLEHKLRTLEQDKHYGGRIKIAKRSHEEQNNKTIEQEKARILGNLA. A compositionally biased stretch (polar residues) spans 314–338; that stretch reads NIHKTNSHASSESVEQNSPGLTTQP. The segment at 314–339 is disordered; it reads NIHKTNSHASSESVEQNSPGLTTQPR.

The protein belongs to the MS5 protein family. Expressed in floral and vegetative organs. Also barely detectable in leaves and stems.

The protein resides in the nucleus. Functionally, probably involved in the regulation of cell division. This chain is Protein POLLENLESS 3-LIKE 1, found in Arabidopsis thaliana (Mouse-ear cress).